The primary structure comprises 58 residues: Teratocyte protein CftICK-III (58 aa).

Positions 1–24 are cleaved as a signal peptide; sequence MQKFMRLFFLGLFFILFMTTQIKA. Intrachain disulfides connect Cys27/Cys42, Cys34/Cys47, and Cys41/Cys55.

As to expression, abundantly expressed by teratocytes, which are extra-embryonic cells released by parasitoid wasps into their hosts during larval eclosion.

It is found in the secreted. In terms of biological role, this endoparasitoid wasp peptide has immununosuppressive and insecticidal activities. Suppress cellular immunity which is detectable as a reduction of hemocyte encapsulation in the host. In vivo, ingestion of this peptide (probably at excessive doses) increases larval mortality and reduces leaf consumption in both lepidopteran species D.saccharalis and S.frugiperda, which are permissive and non-permissive hosts for C.flavipes, respectively. The sequence is that of Teratocyte protein CftICK-III from Cotesia flavipes (Parasitic wasp).